Consider the following 63-residue polypeptide: Sec-independent protein translocase protein TatA (63 aa).

The chain crosses the membrane as a helical span at residues 1-21 (MGSFSMWHWLIVLVIVLLLFG). Residues 42-63 (GMTDEDAPDTAKTVDHKADETK) are disordered. The segment covering 53-63 (KTVDHKADETK) has biased composition (basic and acidic residues).

This sequence belongs to the TatA/E family. In terms of assembly, the Tat system comprises two distinct complexes: a TatABC complex, containing multiple copies of TatA, TatB and TatC subunits, and a separate TatA complex, containing only TatA subunits. Substrates initially bind to the TatABC complex, which probably triggers association of the separate TatA complex to form the active translocon.

Its subcellular location is the cell inner membrane. Its function is as follows. Part of the twin-arginine translocation (Tat) system that transports large folded proteins containing a characteristic twin-arginine motif in their signal peptide across membranes. TatA could form the protein-conducting channel of the Tat system. The chain is Sec-independent protein translocase protein TatA from Rhizobium leguminosarum bv. trifolii (strain WSM2304).